A 25-amino-acid polypeptide reads, in one-letter code: Spinigerin (25 aa).

It localises to the secreted. Its function is as follows. Active against Gram-positive bacteria B.megaterium and M.luteus, Gram-negative bacteria E.coli SBS363 and D22, K.pneumoniae, S.typhimurium and P.aeruginosa, yeast C.albicans and filamentous fungi F.culmorum, N.crassa, N.hematococca and T.viridae. Inactive against Gram-positive bacteria B.subtilis, S.pyogenes, B.thuringiensis and S.aureus, Gram-negative bacteria E.cloacae and E.carotovora and filamentous fungus B.bassiana. This Pseudacanthotermes spiniger protein is Spinigerin.